Consider the following 432-residue polypeptide: Delta-aminolevulinic acid dehydratase, chloroplastic (432 aa).

Positions 84 to 113 are disordered; that stretch reads AAPPVPAKPSAPEGTPAISPLVMPARPRRN. The active-site Schiff-base intermediate with substrate is lysine 300. The 5-aminolevulinate site is built by arginine 310 and lysine 322. Glutamate 338 is a Mg(2+) binding site. Catalysis depends on lysine 353, which acts as the Schiff-base intermediate with substrate. Residues serine 379 and tyrosine 418 each coordinate 5-aminolevulinate.

Belongs to the ALAD family. Homooctamer. Mg(2+) is required as a cofactor.

The protein localises to the plastid. It localises to the chloroplast. The catalysed reaction is 2 5-aminolevulinate = porphobilinogen + 2 H2O + H(+). It participates in porphyrin-containing compound metabolism; protoporphyrin-IX biosynthesis; coproporphyrinogen-III from 5-aminolevulinate: step 1/4. Catalyzes an early step in the biosynthesis of tetrapyrroles. Binds two molecules of 5-aminolevulinate per subunit, each at a distinct site, and catalyzes their condensation to form porphobilinogen. This chain is Delta-aminolevulinic acid dehydratase, chloroplastic (HEMB), found in Physcomitrium patens (Spreading-leaved earth moss).